The chain runs to 81 residues: Large ribosomal subunit protein bL28 (81 aa).

This sequence belongs to the bacterial ribosomal protein bL28 family.

In Gloeobacter violaceus (strain ATCC 29082 / PCC 7421), this protein is Large ribosomal subunit protein bL28.